A 113-amino-acid chain; its full sequence is uncharacterized protein (113 aa).

This is an uncharacterized protein from Escherichia coli O6:H1 (strain CFT073 / ATCC 700928 / UPEC).